The following is a 313-amino-acid chain: Ornithine carbamoyltransferase (313 aa).

Residues 61-64 (STRT), glutamine 88, arginine 112, and 139-142 (HPCQ) contribute to the carbamoyl phosphate site. L-ornithine-binding positions include asparagine 170, aspartate 228, and 232 to 233 (SM). Residues 268–269 (CL) and arginine 296 contribute to the carbamoyl phosphate site.

It belongs to the aspartate/ornithine carbamoyltransferase superfamily. OTCase family.

The protein localises to the cytoplasm. The enzyme catalyses carbamoyl phosphate + L-ornithine = L-citrulline + phosphate + H(+). The protein operates within amino-acid biosynthesis; L-arginine biosynthesis; L-arginine from L-ornithine and carbamoyl phosphate: step 1/3. Reversibly catalyzes the transfer of the carbamoyl group from carbamoyl phosphate (CP) to the N(epsilon) atom of ornithine (ORN) to produce L-citrulline. This Bordetella avium (strain 197N) protein is Ornithine carbamoyltransferase.